The primary structure comprises 459 residues: WD repeat-containing protein 41 (459 aa).

6 WD repeats span residues 40 to 79, 82 to 128, 131 to 168, 220 to 258, 321 to 359, and 403 to 441; these read KAHHDIVRFLVQLDDYRFASAGDDGIVVVWNAQTGEKLLE, GHTQ…QVQR, CFQSTVKCLTVLQRLDVWLSGGNDLCVWNRKLDLLCKT, DHQDNILSLINVNDLSFVTGSHVGELIIWDALDWTMQAY, AHDSNVLHVARLPNRQLISCSEDGSVRIWELREKQQLAA, and GHSSSVEMFLYFEDHGLVTCSADHLIILWKNGERESGLR.

In terms of assembly, component of the C9orf72-SMCR8 complex, at least composed of C9orf72, SMCR8 and WDR41. The complex is formed of two protomers, each individually consisting of one molecule each of C9orf72, SMCR8 and WDR41. The protomers homodimerize via an interaction between C9orf72 (via C-terminus) and SMCR8 (via N-terminus). Within each protomer SMCR8 (via DENN domain) acts as a bridging protein between WDR41 (via C-terminus and N-terminus) and C9orf72 (via C-terminus). The C9orf72-SMCR8 complex associates with the ULK1/ATG1 kinase complex.

It localises to the cytoplasm. In terms of biological role, non-catalytic component of the C9orf72-SMCR8 complex, a complex that has guanine nucleotide exchange factor (GEF) activity and regulates autophagy. The C9orf72-SMCR8 complex promotes the exchange of GDP to GTP, converting inactive GDP-bound RAB8A and RAB39B into their active GTP-bound form, thereby promoting autophagosome maturation. As part of the C9orf72-SMCR8 complex, stimulates RAB8A and RAB11A GTPase activity in vitro, however WDR42 is shown not be an essential complex component for this function. The C9orf72-SMCR8 complex also acts as a negative regulator of autophagy initiation by interacting with the ULK1/ATG1 kinase complex and inhibiting its protein kinase activity. The protein is WD repeat-containing protein 41 of Homo sapiens (Human).